Reading from the N-terminus, the 171-residue chain is Glutamyl-tRNA(Gln) amidotransferase subunit F, mitochondrial (171 aa).

This sequence belongs to the GatF family. Subunit of the heterotrimeric GatFAB amidotransferase (AdT) complex, composed of A, B and F subunits.

It is found in the mitochondrion inner membrane. It catalyses the reaction L-glutamyl-tRNA(Gln) + L-glutamine + ATP + H2O = L-glutaminyl-tRNA(Gln) + L-glutamate + ADP + phosphate + H(+). Functionally, allows the formation of correctly charged Gln-tRNA(Gln) through the transamidation of misacylated Glu-tRNA(Gln) in the mitochondria. The reaction takes place in the presence of glutamine and ATP through an activated gamma-phospho-Glu-tRNA(Gln). Required for proper protein synthesis within the mitochondrion. The chain is Glutamyl-tRNA(Gln) amidotransferase subunit F, mitochondrial from Zygosaccharomyces rouxii (strain ATCC 2623 / CBS 732 / NBRC 1130 / NCYC 568 / NRRL Y-229).